Here is an 86-residue protein sequence, read N- to C-terminus: Anti-adapter protein IraP (86 aa).

Residues 1–36 (MKNLIAELLFKLAQKEEESKELCAQVEALEIIVTAM) are a coiled coil.

This sequence belongs to the IraP family. Interacts with RssB.

Its subcellular location is the cytoplasm. Its function is as follows. Inhibits RpoS proteolysis by regulating RssB activity, thereby increasing the stability of the sigma stress factor RpoS especially during phosphate starvation, but also in stationary phase and during nitrogen starvation. Its effect on RpoS stability is due to its interaction with RssB, which probably blocks the interaction of RssB with RpoS, and the consequent delivery of the RssB-RpoS complex to the ClpXP protein degradation pathway. This is Anti-adapter protein IraP from Escherichia coli (strain SE11).